The sequence spans 219 residues: Protein RhiB (219 aa).

Over residues 174–195 (AGISQQGNAAGTSISSKSTGSP) the composition is skewed to polar residues. The segment at 174 to 201 (AGISQQGNAAGTSISSKSTGSPENPART) is disordered.

Its function is as follows. May be involved in plant-microbe interaction. This Rhizobium leguminosarum bv. viciae protein is Protein RhiB (rhiB).